The sequence spans 447 residues: Cobyrinate a,c-diamide synthase (447 aa).

The GATase cobBQ-type domain occupies 252–439 (KIAIAFDESF…AHQHAVGNPY (188 aa)). C331 acts as the Nucleophile in catalysis.

Belongs to the CobB/CbiA family. The cofactor is Mg(2+).

The enzyme catalyses cob(II)yrinate + 2 L-glutamine + 2 ATP + 2 H2O = cob(II)yrinate a,c diamide + 2 L-glutamate + 2 ADP + 2 phosphate + 2 H(+). It catalyses the reaction Ni-sirohydrochlorin + 2 L-glutamine + 2 ATP + 2 H2O = Ni-sirohydrochlorin a,c-diamide + 2 L-glutamate + 2 ADP + 2 phosphate + 2 H(+). The protein operates within cofactor biosynthesis; adenosylcobalamin biosynthesis; cob(II)yrinate a,c-diamide from sirohydrochlorin (anaerobic route): step 10/10. Its function is as follows. Catalyzes the ATP-dependent amidation of the two carboxylate groups at positions a and c of cobyrinate, using either L-glutamine or ammonia as the nitrogen source. Involved in the biosynthesis of the unique nickel-containing tetrapyrrole coenzyme F430, the prosthetic group of methyl-coenzyme M reductase (MCR), which plays a key role in methanogenesis and anaerobic methane oxidation. Catalyzes the ATP-dependent amidation of the two carboxylate groups at positions a and c of Ni-sirohydrochlorin, using L-glutamine or ammonia as the nitrogen source. The sequence is that of Cobyrinate a,c-diamide synthase from Methanococcus vannielii (strain ATCC 35089 / DSM 1224 / JCM 13029 / OCM 148 / SB).